The sequence spans 384 residues: Alanine racemase (384 aa).

Catalysis depends on K39, which acts as the Proton acceptor; specific for D-alanine. The residue at position 39 (K39) is an N6-(pyridoxal phosphate)lysine. Substrate is bound at residue R136. The Proton acceptor; specific for L-alanine role is filled by Y265. M312 serves as a coordination point for substrate.

The protein belongs to the alanine racemase family. Pyridoxal 5'-phosphate serves as cofactor.

The catalysed reaction is L-alanine = D-alanine. The protein operates within amino-acid biosynthesis; D-alanine biosynthesis; D-alanine from L-alanine: step 1/1. Its function is as follows. Catalyzes the interconversion of L-alanine and D-alanine. May also act on other amino acids. This Geobacillus kaustophilus (strain HTA426) protein is Alanine racemase (alr).